The sequence spans 695 residues: MIVRMIRLCKGPKLLRSQFASASALYSTKSLFKPPMYQKAEINLIIPHRKHFLLRSIRLQSDIAQGKKSTKPTLKLSNANSKSSGFKDIKRLFVLSKPESKYIGLALLLILISSSVSMAVPSVIGKLLDLASESDGEDEEGSKSNKLYGFTKKQFFTALGAVFIIGAVANASRIIILKVTGERLVARLRTRTMKAALDQDATFLDTNRVGDLISRLSSDASIVAKSVTQNVSDGTRAIIQGFVGFGMMSFLSWKLTCVMMILAPPLGAMALIYGRKIRNLSRQLQTSVGGLTKVAEEQLNATRTIQAYGGEKNEVRRYAKEVRNVFHIGLKEAVTSGLFFGSTGLVGNTAMLSLLLVGTSMIQSGSMTVGELSSFMMYAVYTGSSLFGLSSFYSELMKGAGAAARVFELNDRKPLIRPTIGKDPVSLAQKPIVFKNVSFTYPTRPKHQIFKDLNITIKPGEHVCAVGPSGSGKSTIASLLLRYYDVNSGSIEFGDEDIRNFNLRKYRRLIGYVQQEPLLFNGTILDNILYCIPPEIAEQDDRIRRAIGKANCTKFLANFPDGLQTMVGARGAQLSGGQKQRIALARAFLLDPAVLILDEATSALDSQSEEIVAKNLQRRVERGFTTISIAHRLSTIKHSTRVIVLGKHGSVVETGSFRDLIAIPNSELNALLAEQQDEEGKGGVIDLDNSVAREV.

The N-terminal 100 residues, 1-100, are a transit peptide targeting the mitochondrion; that stretch reads MIVRMIRLCK…RLFVLSKPES (100 aa). The next 5 membrane-spanning stretches (helical) occupy residues 103-123, 156-176, 242-262, 337-357, and 372-392; these read IGLALLLILISSSVSMAVPSV, FTALGAVFIIGAVANASRIII, FVGFGMMSFLSWKLTCVMMIL, GLFFGSTGLVGNTAMLSLLLV, and LSSFMMYAVYTGSSLFGLSSF. One can recognise an ABC transmembrane type-1 domain in the interval 103 to 398; the sequence is IGLALLLILI…LSSFYSELMK (296 aa). Residues 432 to 673 enclose the ABC transporter domain; sequence IVFKNVSFTY…PNSELNALLA (242 aa). Residue 467 to 474 participates in ATP binding; sequence GPSGSGKS.

It belongs to the ABC transporter superfamily. ABCB family. Mitochondrial peptide exporter (TC 3.A.1.212) subfamily.

It localises to the mitochondrion inner membrane. In terms of biological role, mediates export of peptides with molecular masses of 2100 to 600 daltons generated upon proteolysis of mitochondrial inner membrane proteins. In Saccharomyces cerevisiae (strain ATCC 204508 / S288c) (Baker's yeast), this protein is ATP-dependent permease MDL1, mitochondrial (MDL1).